A 434-amino-acid chain; its full sequence is Septin-6 (434 aa).

Alanine 2 is subject to N-acetylalanine. At serine 27 the chain carries Phosphoserine. Residues 39–305 (QGFCFNILCV…ELYRRCKLEE (267 aa)) form the Septin-type G domain. The interval 49 to 56 (GETGLGKS) is G1 motif. Residues 49-56 (GETGLGKS), glycine 104, 185-193 (KSDAISKSE), glycine 239, and arginine 254 contribute to the GTP site. Positions 101–104 (STVG) are G3 motif. The G4 motif stretch occupies residues 184–187 (AKSD). Residues 321–407 (QETYEAKRNE…QRKAAAELLQ (87 aa)) adopt a coiled-coil conformation. Position 367 is an N6-acetyllysine (lysine 367). The interval 403–434 (AELLQSQGSQAGGSQTLKRDKEKKNNPWLCIE) is disordered. Residues 407-417 (QSQGSQAGGSQ) show a composition bias toward low complexity. Serine 416 carries the post-translational modification Phosphoserine. A Phosphothreonine modification is found at threonine 418.

Belongs to the TRAFAC class TrmE-Era-EngA-EngB-Septin-like GTPase superfamily. Septin GTPase family. As to quaternary structure, septins polymerize into heterooligomeric protein complexes that form filaments, and associate with cellular membranes, actin filaments and microtubules. GTPase activity is required for filament formation. Filaments are assembled from asymmetrical heterotrimers, composed of SEPTIN2, SEPTIN6 and SEPTIN7 that associate head-to-head to form a hexameric unit. Within the trimer, directly interacts with SEPTIN2 and SEPTIN7. Also interacts with SEPTIN9 and SEPTIN12. Interaction with SEPTIN12 alters filament structure. Component of a septin core octameric complex consisting of SEPTIN12, SEPTIN7, SEPTIN6 and SEPTIN2 or SEPTIN4 in the order 12-7-6-2-2-6-7-12 or 12-7-6-4-4-6-7-12 and located in the sperm annulus. Interacts with SOCS7. Interacts with HNRNPA1. In terms of tissue distribution, expressed in the cerebral cortex (at protein level). Associated with synaptic vesicles in various brain regions, including glomeruli of the olfactory bulb (at protein level).

The protein localises to the cytoplasm. It is found in the cytoskeleton. It localises to the spindle. Its subcellular location is the chromosome. The protein resides in the centromere. The protein localises to the kinetochore. It is found in the cleavage furrow. It localises to the midbody. Its subcellular location is the cell projection. The protein resides in the cilium. The protein localises to the flagellum. Functionally, filament-forming cytoskeletal GTPase. Required for normal organization of the actin cytoskeleton. Involved in cytokinesis. Forms a filamentous structure with SEPTIN12, SEPTIN6, SEPTIN2 and probably SEPTIN4 at the sperm annulus which is required for the structural integrity and motility of the sperm tail during postmeiotic differentiation. In Mus musculus (Mouse), this protein is Septin-6.